An 804-amino-acid chain; its full sequence is MSHADMNNCSGFNEAAAAFSWNSPKKAINPYLDLAEVAPVSALSNLITLYAADNEQEQLRREALSDQVWERYFFNESRDPVQREMEQDKFISRAKLAHEQQRFNPDMVILADVNAQPSHISRPLMQRIEYFSSLGRPKAYSRYLRETIKPCLERLEHVRDSQLSTSFRFMASHEGLDGLLILPEMSQDQVKRLSTLVAAHMSMCLDAACGDLYATDDVKPEEIRKTWEKVAAETLRLDVIPPAFEQLRRKRNRRKPVPYELIPGSLARMLCADWWYRKLWKMRCEWREEQLRAVCLVSKKASPYVSYEAMMHKREQRRKSLEFFRSHELVNEDGDTLDMEDVVNASSSNPAHRRNEMMACVKGLELIAEMRGDCAVFYTITCPSRFHSTLNNGRPNPTWTNTTVRQSSDYLVGMFAAFRKAMHKAGLRWYGVRVAEPHHDGTVHWHLLCFMRKKDRRTITALLRKFAIREDREELGNNTGPRFKSELINPRKGTPTSYIAKYISKNIDGRGLAGEISKETGKSLRDNAEYVNAWASLHRVQQFRFFGIPGRQAYRELRLLAGQAARQQGDKKAGAPVLDNPRLDAILAAADAGCFATYIMKQGGVLVPRKYHLIRTAYEINEEPTAYGDHGIRIYGIWSPIAEGKICTHAVKWKMVRKAVDVQEAAADQGACAPWTRGNNCPLAENLNQHEKDKSADGDTRTDITCMDDKELHDYLHSMGKKEHRELAARLRLVKPKRRKDHKQRITEHQRQQLVYELKSRGFDGSEKEVDLLLRGGSIPSGAGLRIFYRNQRLQEDDKWRDLY.

Active-site O-(5'-phospho-DNA)-tyrosine intermediate residues include Tyr-498 and Tyr-502.

This sequence belongs to the phage GPA family.

Possible endonuclease which induces a single-strand cut and initiates DNA replication. The polypeptide is Probable replication endonuclease from prophage-like region 1 (Salmonella typhi).